We begin with the raw amino-acid sequence, 334 residues long: Ribosomal RNA small subunit methyltransferase H (334 aa).

S-adenosyl-L-methionine contacts are provided by residues G53 to H55, D72, F99, D122, and H129.

It belongs to the methyltransferase superfamily. RsmH family.

It localises to the cytoplasm. The enzyme catalyses cytidine(1402) in 16S rRNA + S-adenosyl-L-methionine = N(4)-methylcytidine(1402) in 16S rRNA + S-adenosyl-L-homocysteine + H(+). Its function is as follows. Specifically methylates the N4 position of cytidine in position 1402 (C1402) of 16S rRNA. This chain is Ribosomal RNA small subunit methyltransferase H, found in Leptospira interrogans serogroup Icterohaemorrhagiae serovar Lai (strain 56601).